Reading from the N-terminus, the 414-residue chain is 3-oxo-tetronate kinase (414 aa).

Residues Ser-255, 355–358, and Gly-398 each bind ATP; that span reads GGET.

This sequence belongs to the four-carbon acid sugar kinase family.

The catalysed reaction is 3-dehydro-L-erythronate + ATP = 3-dehydro-4-O-phospho-L-erythronate + ADP + H(+). It carries out the reaction 3-dehydro-D-erythronate + ATP = 3-dehydro-4-O-phospho-D-erythronate + ADP + H(+). Catalyzes the ATP-dependent phosphorylation of 3-oxo-tetronate to 3-oxo-tetronate 4-phosphate. This is 3-oxo-tetronate kinase from Actinobacillus succinogenes (strain ATCC 55618 / DSM 22257 / CCUG 43843 / 130Z).